The primary structure comprises 189 residues: Flavin prenyltransferase UbiX (189 aa).

FMN is bound by residues 11-13 (GAS), S37, 88-91 (SMRT), and R123. Y153 is a binding site for dimethylallyl phosphate.

The protein belongs to the UbiX/PAD1 family.

It carries out the reaction dimethylallyl phosphate + FMNH2 = prenylated FMNH2 + phosphate. In terms of biological role, flavin prenyltransferase that catalyzes the synthesis of the prenylated FMN cofactor (prenyl-FMN) for 4-hydroxy-3-polyprenylbenzoic acid decarboxylase UbiD. The prenyltransferase is metal-independent and links a dimethylallyl moiety from dimethylallyl monophosphate (DMAP) to the flavin N5 and C6 atoms of FMN. The sequence is that of Flavin prenyltransferase UbiX from Neisseria meningitidis serogroup B (strain ATCC BAA-335 / MC58).